Here is a 1127-residue protein sequence, read N- to C-terminus: Testis-expressed protein 2 (1127 aa).

2 disordered regions span residues 1 to 27 and 133 to 279; these read MTSLYGRHAEKTTDMPKPSAPKVHVQR and AVSP…SFFK. A compositionally biased stretch (low complexity) spans 133–187; sequence AVSPGSSSSGPLASSPSVSSLSEQKTSSSSPLSSPSKSPILSSSASTSTLSSAKP. Position 196 is a phosphoserine (Ser196). Positions 249–275 are enriched in polar residues; the sequence is QFTQPRNTGGDSKTAPSSPLTSPSDTR. A Phosphothreonine modification is found at Thr262. A phosphoserine mark is found at Ser265, Ser266, Ser270, and Ser295. The N-linked (GlcNAc...) asparagine glycan is linked to Asn330. The interval 348 to 386 is disordered; sequence EEECDSEGDGYGSDSNIPRSDHPKSTGEPTREIELKSSQ. Residues 366-382 show a composition bias toward basic and acidic residues; it reads RSDHPKSTGEPTREIEL. 2 helical membrane-spanning segments follow: residues 475-495 and 497-517; these read TLGFFIMCVYVYLILPLPHYV and GLFLGIGLGFMTAVCVIWFFT. Disordered stretches follow at residues 648–685, 715–764, 786–816, and 947–980; these read KAQTDKETSEEKPPAEGSEDPKKPPRPQEGTRSSQRDQ, KKSS…QKEL, QESRSPQRSPLQSAESSPTAGKKLPEVPPSE, and DEESSSAGSSEEDDAPEPSGGDKQLLPGAEGYVG. Residues 650–670 are compositionally biased toward basic and acidic residues; it reads QTDKETSEEKPPAEGSEDPKK. Residues Ser732, Ser738, Ser744, Ser748, Ser751, Ser798, and Ser815 each carry the phosphoserine modification. A compositionally biased stretch (polar residues) spans 735–750; the sequence is NSPSGHLTHSRSSSKG. The segment covering 787-804 has biased composition (polar residues); the sequence is ESRSPQRSPLQSAESSPT. Residues 816 to 1101 enclose the SMP-LTD domain; the sequence is EEEEQEAWVN…MPNMDDVYIT (286 aa). Residues 947–962 show a composition bias toward acidic residues; that stretch reads DEESSSAGSSEEDDAP.

It is found in the endoplasmic reticulum membrane. It localises to the nucleus membrane. During endoplasmic reticulum (ER) stress or when cellular ceramide levels increase, may induce contacts between the ER and medial-Golgi complex to facilitate non-vesicular transport of ceramides from the ER to the Golgi complex where they are converted to complex sphingolipids, preventing toxic ceramide accumulation. This chain is Testis-expressed protein 2 (TEX2), found in Homo sapiens (Human).